Reading from the N-terminus, the 637-residue chain is 1-deoxy-D-xylulose-5-phosphate synthase (637 aa).

Thiamine diphosphate contacts are provided by residues His76 and 117-119 (GHS). Asp148 is a binding site for Mg(2+). Thiamine diphosphate contacts are provided by residues 149–150 (GA), Asn177, Tyr294, and Glu381. Asn177 contacts Mg(2+).

This sequence belongs to the transketolase family. DXPS subfamily. In terms of assembly, homodimer. Requires Mg(2+) as cofactor. The cofactor is thiamine diphosphate.

The enzyme catalyses D-glyceraldehyde 3-phosphate + pyruvate + H(+) = 1-deoxy-D-xylulose 5-phosphate + CO2. It participates in metabolic intermediate biosynthesis; 1-deoxy-D-xylulose 5-phosphate biosynthesis; 1-deoxy-D-xylulose 5-phosphate from D-glyceraldehyde 3-phosphate and pyruvate: step 1/1. Catalyzes the acyloin condensation reaction between C atoms 2 and 3 of pyruvate and glyceraldehyde 3-phosphate to yield 1-deoxy-D-xylulose-5-phosphate (DXP). The polypeptide is 1-deoxy-D-xylulose-5-phosphate synthase (Neisseria meningitidis serogroup A / serotype 4A (strain DSM 15465 / Z2491)).